Here is a 618-residue protein sequence, read N- to C-terminus: D-glucuronyl C5-epimerase (618 aa).

Topologically, residues 1–11 are cytoplasmic; that stretch reads MRCLAARVNYK. Residues 12-29 traverse the membrane as a helical; Signal-anchor for type II membrane protein segment; sequence TLIIICALFTLVTVLLWN. Residues 30–618 are Lumenal-facing; sequence KCSSDKAIQF…YLKGSRAKHN (589 aa). Substrate-binding positions include Y180, 185 to 187, Q202, Y210, Q213, and Q216; that span reads RDR. Residues T238, E240, T269, N270, and D393 each coordinate Ca(2+). Substrate contacts are provided by residues 430-433, 500-501, N511, Y515, Y561, R564, and 573-582; these read KLGE, EY, and NLARWDYHTT.

Belongs to the D-glucuronyl C5-epimerase family. As to quaternary structure, homodimer. Interacts with HS2ST1. Widely expressed with highest levels in lung and lowest levels in spleen.

The protein resides in the golgi apparatus membrane. It carries out the reaction [heparosan-N-sulfate](n) = [heparan-N-sulfate](n). Its pathway is glycan metabolism; heparan sulfate biosynthesis. The protein operates within glycan metabolism; heparin biosynthesis. In terms of biological role, converts D-glucuronic acid residues adjacent to N-sulfate sugar residues to L-iduronic acid residues, both in maturing heparan sulfate (HS) and heparin chains. This is important for further modifications that determine the specificity of interactions between these glycosaminoglycans and proteins. This Mus musculus (Mouse) protein is D-glucuronyl C5-epimerase (Glce).